The chain runs to 628 residues: Chaperone protein DnaK (628 aa).

A Phosphothreonine; by autocatalysis modification is found at Thr174. A disordered region spans residues 589-628 (AAGGAGPDMGAGAGPDMGAGASNGSAPYGDDVVDGDYKEV). Gly residues predominate over residues 591–605 (GGAGPDMGAGAGPDM).

The protein belongs to the heat shock protein 70 family.

In terms of biological role, acts as a chaperone. The protein is Chaperone protein DnaK of Lachnospira eligens (strain ATCC 27750 / DSM 3376 / VPI C15-48 / C15-B4) (Eubacterium eligens).